The following is a 61-amino-acid chain: Small ribosomal subunit protein uS14 (61 aa).

4 residues coordinate Zn(2+): C24, C27, C40, and C43.

Belongs to the universal ribosomal protein uS14 family. Zinc-binding uS14 subfamily. As to quaternary structure, part of the 30S ribosomal subunit. Contacts proteins S3 and S10. Zn(2+) is required as a cofactor.

Binds 16S rRNA, required for the assembly of 30S particles and may also be responsible for determining the conformation of the 16S rRNA at the A site. This Streptococcus mutans serotype c (strain ATCC 700610 / UA159) protein is Small ribosomal subunit protein uS14.